The primary structure comprises 459 residues: cAMP-dependent protein kinase regulatory subunit (459 aa).

The interval 30 to 219 (QFCANYFNTK…TLANNLKNNF (190 aa)) is dimerization and phosphorylation. 2 disordered regions span residues 78–109 (VNDR…DTKT) and 125–168 (FDVK…PSSK). Positions 95 to 109 (HSNHDEDPHAKDTKT) are enriched in basic and acidic residues. A compositionally biased stretch (low complexity) spans 146–168 (KPSSSSQPNQQSASASSKTPSSK). A Phosphoserine modification is found at S180. 3',5'-cyclic AMP is bound by residues 220–335 (LFKQ…FLKD), E285, R294, 338–454 (VLKS…KSQD), E404, and R413.

Belongs to the cAMP-dependent kinase regulatory chain family. In terms of assembly, tetramer, composed of 2 regulatory (R) and 2 catalytic (C) subunits. In the presence of cAMP it dissociates into 2 active monomeric C subunits and an R dimer.

This Candida albicans (strain SC5314 / ATCC MYA-2876) (Yeast) protein is cAMP-dependent protein kinase regulatory subunit (BCY1).